A 493-amino-acid polypeptide reads, in one-letter code: 3-octaprenyl-4-hydroxybenzoate carboxy-lyase (493 aa).

Asn172 lines the Mn(2+) pocket. Residues 175 to 177, 189 to 191, and 194 to 195 contribute to the prenylated FMN site; these read IYR, RWL, and RG. Position 238 (Glu238) interacts with Mn(2+). The active-site Proton donor is Asp287.

This sequence belongs to the UbiD family. As to quaternary structure, homohexamer. Prenylated FMN serves as cofactor. The cofactor is Mn(2+).

The protein localises to the cell membrane. The catalysed reaction is a 4-hydroxy-3-(all-trans-polyprenyl)benzoate + H(+) = a 2-(all-trans-polyprenyl)phenol + CO2. The protein operates within cofactor biosynthesis; ubiquinone biosynthesis. In terms of biological role, catalyzes the decarboxylation of 3-octaprenyl-4-hydroxy benzoate to 2-octaprenylphenol, an intermediate step in ubiquinone biosynthesis. The sequence is that of 3-octaprenyl-4-hydroxybenzoate carboxy-lyase from Shewanella baltica (strain OS195).